The chain runs to 352 residues: UDP-3-O-acylglucosamine N-acyltransferase (352 aa).

His257 serves as the catalytic Proton acceptor.

The protein belongs to the transferase hexapeptide repeat family. LpxD subfamily. In terms of assembly, homotrimer.

The enzyme catalyses a UDP-3-O-[(3R)-3-hydroxyacyl]-alpha-D-glucosamine + a (3R)-hydroxyacyl-[ACP] = a UDP-2-N,3-O-bis[(3R)-3-hydroxyacyl]-alpha-D-glucosamine + holo-[ACP] + H(+). It participates in bacterial outer membrane biogenesis; LPS lipid A biosynthesis. Its function is as follows. Catalyzes the N-acylation of UDP-3-O-acylglucosamine using 3-hydroxyacyl-ACP as the acyl donor. Is involved in the biosynthesis of lipid A, a phosphorylated glycolipid that anchors the lipopolysaccharide to the outer membrane of the cell. This is UDP-3-O-acylglucosamine N-acyltransferase from Methylobacterium sp. (strain 4-46).